Here is a 1132-residue protein sequence, read N- to C-terminus: DNA topoisomerase 2 (1132 aa).

ATP is bound by residues Asn68, Asn100, 137–139 (SSN), and 150–157 (GKNGLGVK). The segment at 327 to 329 (NKP) is interaction with DNA. Position 363 to 365 (363 to 365 (QNK)) interacts with ATP. A Toprim domain is found at 442–577 (CTLIVCEGLS…NLKDFPFISS (136 aa)). Mg(2+) contacts are provided by Glu448, Asp538, and Asp540. The region spanning 713–1125 (LPHLIDGLKE…NEGQMWLKDI (413 aa)) is the Topo IIA-type catalytic domain. The active-site O-(5'-phospho-DNA)-tyrosine intermediate is the Tyr803. The segment at 979–988 (KLRSYIHTSN) is interaction with DNA.

The protein belongs to the type II topoisomerase family. The cofactor is Mg(2+). Mn(2+) serves as cofactor. Ca(2+) is required as a cofactor.

The catalysed reaction is ATP-dependent breakage, passage and rejoining of double-stranded DNA.. Can introduce negative superhelical turns into double-stranded circular DNA. In Acheta domesticus (House cricket), this protein is DNA topoisomerase 2 (TOP2).